The following is a 402-amino-acid chain: Dual-specificity RNA methyltransferase RlmN (402 aa).

Catalysis depends on E94, which acts as the Proton acceptor. The 252-residue stretch at 100–351 folds into the Radical SAM core domain; it reads EDDRGTLCIS…ATVRKTRGDD (252 aa). C107 and C356 form a disulfide bridge. Residues C114, C118, and C121 each coordinate [4Fe-4S] cluster. S-adenosyl-L-methionine-binding positions include 182-183, S214, 236-238, and N313; these read GE and SLH. C356 acts as the S-methylcysteine intermediate in catalysis.

It belongs to the radical SAM superfamily. RlmN family. The cofactor is [4Fe-4S] cluster.

It localises to the cytoplasm. It carries out the reaction adenosine(2503) in 23S rRNA + 2 reduced [2Fe-2S]-[ferredoxin] + 2 S-adenosyl-L-methionine = 2-methyladenosine(2503) in 23S rRNA + 5'-deoxyadenosine + L-methionine + 2 oxidized [2Fe-2S]-[ferredoxin] + S-adenosyl-L-homocysteine. The enzyme catalyses adenosine(37) in tRNA + 2 reduced [2Fe-2S]-[ferredoxin] + 2 S-adenosyl-L-methionine = 2-methyladenosine(37) in tRNA + 5'-deoxyadenosine + L-methionine + 2 oxidized [2Fe-2S]-[ferredoxin] + S-adenosyl-L-homocysteine. Its function is as follows. Specifically methylates position 2 of adenine 2503 in 23S rRNA and position 2 of adenine 37 in tRNAs. m2A2503 modification seems to play a crucial role in the proofreading step occurring at the peptidyl transferase center and thus would serve to optimize ribosomal fidelity. This Polynucleobacter asymbioticus (strain DSM 18221 / CIP 109841 / QLW-P1DMWA-1) (Polynucleobacter necessarius subsp. asymbioticus) protein is Dual-specificity RNA methyltransferase RlmN.